The sequence spans 927 residues: GPI inositol-deacylase (927 aa).

The Cytoplasmic segment spans residues 1–4; sequence MNPL. Residues 5-25 form a helical membrane-spanning segment; that stretch reads SAVFNSVVLVLLALGVTDVFF. Residues 26-595 lie on the Lumenal side of the membrane; sequence SYESSRCSMT…QIVRFHGIYL (570 aa). Residues Asn75 and Asn155 are each glycosylated (N-linked (GlcNAc...) asparagine). Ser169 is a catalytic residue. N-linked (GlcNAc...) asparagine glycans are attached at residues Asn230, Asn362, Asn397, Asn432, Asn444, and Asn482. Residues 596–616 traverse the membrane as a helical segment; it reads PVYIVANLLLAYGAQLHSILI. Residues 617-672 are Cytoplasmic-facing; that stretch reads QGSCMDLDLSFDVAAKPYKVDPVLIICKYLLNYKWFKNYWDGLMLPQLDAVQLHAY. Residues 673–693 traverse the membrane as a helical segment; the sequence is GFWFPLASLFFFIFGTSIAYW. Over 694–733 the chain is Lumenal; it reads SSIGLQAAVRILSSLWIYLKRPSMFPKESKCITYRVYAET. Residues 734–754 traverse the membrane as a helical segment; the sequence is LFFAFISWRSCGTFSLLLVFL. Residues 755-821 lie on the Cytoplasmic side of the membrane; it reads RYLSKVLILY…KALDDCLKMH (67 aa). A helical transmembrane segment spans residues 822-842; sequence FTILHLNLWIVLLGLPSFIYW. The Lumenal portion of the chain corresponds to 843 to 858; sequence LKTLRYTIQLDPDPNR. The helical transmembrane segment at 859–879 threads the bilayer; the sequence is VSALVLIFILEILMNSTTSAI. Topologically, residues 880–887 are cytoplasmic; sequence KSSVCLKT. Residues 888 to 908 traverse the membrane as a helical segment; the sequence is AAVLQLPLSIIVVAFGTLHLY. Over 909–927 the chain is Lumenal; it reads RISNLIAFSLFLHVVCCFV.

This sequence belongs to the GPI inositol-deacylase family.

Its subcellular location is the endoplasmic reticulum membrane. Functionally, GPI inositol-deacylase that catalyzes the remove of the acyl chain linked to the 2-OH position of inositol ring from the GPI-anchored protein (GPI-AP) in the endoplasmic reticulum. Initiates the post-attachment remodeling phase of GPI-AP biogenesis and participates in endoplasmic reticulum (ER)-to-Golgi transport of GPI-anchored protein. This is GPI inositol-deacylase from Xenopus laevis (African clawed frog).